We begin with the raw amino-acid sequence, 110 residues long: Large ribosomal subunit protein uL24 (110 aa).

Belongs to the universal ribosomal protein uL24 family. In terms of assembly, part of the 50S ribosomal subunit.

Its function is as follows. One of two assembly initiator proteins, it binds directly to the 5'-end of the 23S rRNA, where it nucleates assembly of the 50S subunit. One of the proteins that surrounds the polypeptide exit tunnel on the outside of the subunit. The polypeptide is Large ribosomal subunit protein uL24 (Ureaplasma parvum serovar 3 (strain ATCC 27815 / 27 / NCTC 11736)).